The following is a 258-amino-acid chain: MVGILPLCCSGCVPSLCCSSYVPSVAPTAAHSVRVPHSAGHCGQRVLACSLPQVFLKPWIFVEHFSSWLSLELFSFLRYLGTLLCACGHRLREGLLLPCLLGVGSWLLFNNWTGGSWFSLHLQQVSLSQGSHVAAFLPEAIGPGVPVPVSGESTSAQQSHAGWQLSAEADACPSVLYSEVLEWNKNINTYTSFHDFCLILGIFLFCFVLAVIGLPYIKPGLSLSVALLWQSLILLSSLVQQDSQVHTWGCLFSTFTST.

Positions 1–19 (MVGILPLCCSGCVPSLCCS) are cleaved as a signal peptide. Transmembrane regions (helical) follow at residues 94-114 (GLLL…NWTG), 197-217 (CLIL…LPYI), and 219-239 (PGLS…SSLV).

It is found in the membrane. This is an uncharacterized protein from Homo sapiens (Human).